Reading from the N-terminus, the 242-residue chain is uncharacterized protein (242 aa).

This is an uncharacterized protein from Bacillus subtilis (strain 168).